Consider the following 320-residue polypeptide: Arabinan endo-1,5-alpha-L-arabinosidase C (320 aa).

The N-terminal stretch at 1–15 (MKLALSLFLLSGSLA) is a signal peptide. Residue aspartate 31 is the Proton acceptor of the active site. Residues asparagine 126 and asparagine 190 are each glycosylated (N-linked (GlcNAc...) asparagine). The Proton donor role is filled by glutamate 198.

This sequence belongs to the glycosyl hydrolase 43 family.

The protein localises to the secreted. It catalyses the reaction Endohydrolysis of (1-&gt;5)-alpha-arabinofuranosidic linkages in (1-&gt;5)-arabinans.. Its pathway is glycan metabolism; L-arabinan degradation. In terms of biological role, endo-1,5-alpha-L-arabinanase involved in degradation of pectin. Its preferred substrate is linear 1,5-alpha-L-arabinan. The chain is Arabinan endo-1,5-alpha-L-arabinosidase C (abnC) from Emericella nidulans (strain FGSC A4 / ATCC 38163 / CBS 112.46 / NRRL 194 / M139) (Aspergillus nidulans).